Here is a 63-residue protein sequence, read N- to C-terminus: Bowman-birk type proteinase inhibitor 2 (63 aa).

7 disulfides stabilise this stretch: C7-C61, C8-C23, C11-C57, C13-C21, C31-C38, C35-C50, and C40-C48.

This sequence belongs to the Bowman-Birk serine protease inhibitor family. Exists as a dimer in its native form.

Its function is as follows. Inhibits trypsin, chymotrypsin, plasmin and factor XIIa. Does not inhibit factor Xa, thrombin, human plasma kallikrein, porcine pancreatic kallikrein and human urinary kallikrein. In Amburana cearensis (Cerejeira), this protein is Bowman-birk type proteinase inhibitor 2.